The primary structure comprises 829 residues: Periplasmic nitrate reductase (829 aa).

A signal peptide (tat-type signal) is located at residues 1–30; sequence MKLSRRDFMKANAVAAAAAVAGVSAPTLAA. Positions 41–97 constitute a 4Fe-4S Mo/W bis-MGD-type domain; the sequence is IKWDKAPCRFCGTGCSVLVGSQDGRVVATQGDPDAPVNRGLNCIKGYFLSKIMYGED. 4 residues coordinate [4Fe-4S] cluster: cysteine 48, cysteine 51, cysteine 55, and cysteine 83. Residues lysine 85, glutamine 152, asparagine 177, cysteine 181, 214–221, 245–249, 264–266, methionine 374, glutamine 378, asparagine 484, 510–511, lysine 533, aspartate 560, and 719–728 contribute to the Mo-bis(molybdopterin guanine dinucleotide) site; these read WGSNMAEM, STFEH, QTD, SD, and TGRVLEHWHT. Phenylalanine 795 contributes to the substrate binding site. Residues asparagine 803 and lysine 820 each contribute to the Mo-bis(molybdopterin guanine dinucleotide) site.

The protein belongs to the prokaryotic molybdopterin-containing oxidoreductase family. NasA/NapA/NarB subfamily. In terms of assembly, component of the periplasmic nitrate reductase NapAB complex composed of NapA and NapB. [4Fe-4S] cluster is required as a cofactor. It depends on Mo-bis(molybdopterin guanine dinucleotide) as a cofactor. In terms of processing, predicted to be exported by the Tat system. The position of the signal peptide cleavage has not been experimentally proven.

It is found in the periplasm. It catalyses the reaction 2 Fe(II)-[cytochrome] + nitrate + 2 H(+) = 2 Fe(III)-[cytochrome] + nitrite + H2O. Functionally, catalytic subunit of the periplasmic nitrate reductase complex NapAB. Receives electrons from NapB and catalyzes the reduction of nitrate to nitrite. The sequence is that of Periplasmic nitrate reductase from Aeromonas salmonicida (strain A449).